Here is a 184-residue protein sequence, read N- to C-terminus: Glucosamine 6-phosphate N-acetyltransferase (184 aa).

An N-acetyltransferase domain is found at 39-184 (LVLRPLCTAD…ENYMCRRFLK (146 aa)). Substrate is bound by residues Thr-61, 108–111 (KFIH), and 120–122 (EDV). Residue 130–135 (GKQLGK) coordinates acetyl-CoA. Residue 151–152 (YK) coordinates substrate. 165-167 (YKK) lines the acetyl-CoA pocket. Substrate-binding residues include Glu-175 and Arg-181.

The protein belongs to the acetyltransferase family. GNA1 subfamily. As to quaternary structure, homodimer. Ubiquitous. Shows a strong differential expression pattern in adult hematopoietic precursor cells.

The protein resides in the golgi apparatus membrane. It localises to the endosome membrane. The enzyme catalyses D-glucosamine 6-phosphate + acetyl-CoA = N-acetyl-D-glucosamine 6-phosphate + CoA + H(+). Its pathway is nucleotide-sugar biosynthesis; UDP-N-acetyl-alpha-D-glucosamine biosynthesis; N-acetyl-alpha-D-glucosamine 1-phosphate from alpha-D-glucosamine 6-phosphate (route I): step 1/2. This Mus musculus (Mouse) protein is Glucosamine 6-phosphate N-acetyltransferase (Gnpnat1).